A 334-amino-acid polypeptide reads, in one-letter code: Aspartate carbamoyltransferase catalytic subunit (334 aa).

Carbamoyl phosphate is bound by residues arginine 71 and threonine 72. Lysine 99 contributes to the L-aspartate binding site. Arginine 121, histidine 151, and glutamine 154 together coordinate carbamoyl phosphate. Residues arginine 184 and arginine 239 each coordinate L-aspartate. The carbamoyl phosphate site is built by glycine 280 and proline 281.

The protein belongs to the aspartate/ornithine carbamoyltransferase superfamily. ATCase family. As to quaternary structure, heterododecamer (2C3:3R2) of six catalytic PyrB chains organized as two trimers (C3), and six regulatory PyrI chains organized as three dimers (R2).

The enzyme catalyses carbamoyl phosphate + L-aspartate = N-carbamoyl-L-aspartate + phosphate + H(+). It functions in the pathway pyrimidine metabolism; UMP biosynthesis via de novo pathway; (S)-dihydroorotate from bicarbonate: step 2/3. Catalyzes the condensation of carbamoyl phosphate and aspartate to form carbamoyl aspartate and inorganic phosphate, the committed step in the de novo pyrimidine nucleotide biosynthesis pathway. The protein is Aspartate carbamoyltransferase catalytic subunit of Pseudomonas putida (strain GB-1).